The following is a 470-amino-acid chain: Alpha-galactosidase (470 aa).

The first 18 residues, 1–18, serve as a signal peptide directing secretion; that stretch reads MFSLLLLTSTALVETALG. A disulfide bridge links cysteine 42 with cysteine 74. Asparagine 43 carries N-linked (GlcNAc...) asparagine glycosylation. 2 residues coordinate substrate: aspartate 72 and aspartate 73. Asparagine 82 carries an N-linked (GlcNAc...) asparagine glycan. The cysteines at positions 121 and 151 are disulfide-linked. Lysine 147 is a substrate binding site. The Nucleophile role is filled by aspartate 149. N-linked (GlcNAc...) asparagine glycosylation is present at asparagine 175. Arginine 205 contributes to the substrate binding site. Aspartate 209 serves as the catalytic Proton donor. 2 disulfides stabilise this stretch: cysteine 221–cysteine 237 and cysteine 223–cysteine 230. A substrate-binding site is contributed by glutamine 251. N-linked (GlcNAc...) asparagine glycosylation is found at asparagine 270, asparagine 388, asparagine 413, asparagine 422, asparagine 435, and asparagine 454.

The protein belongs to the glycosyl hydrolase 27 family. Homotetramer.

Its subcellular location is the secreted. It catalyses the reaction Hydrolysis of terminal, non-reducing alpha-D-galactose residues in alpha-D-galactosides, including galactose oligosaccharides, galactomannans and galactolipids.. This chain is Alpha-galactosidase (MEL), found in Zygotorulaspora mrakii (Zygosaccharomyces mrakii).